The primary structure comprises 291 residues: Shikimate dehydrogenase (NADP(+)) (291 aa).

Residues 18–20 (SLS) and Thr70 each bind shikimate. Residue Lys74 is the Proton acceptor of the active site. Shikimate is bound by residues Asn95 and Asp110. Residues 134–138 (GAGGA) and Val228 each bind NADP(+). Residue Tyr230 participates in shikimate binding. Gly251 contacts NADP(+).

This sequence belongs to the shikimate dehydrogenase family. Homodimer.

It carries out the reaction shikimate + NADP(+) = 3-dehydroshikimate + NADPH + H(+). It participates in metabolic intermediate biosynthesis; chorismate biosynthesis; chorismate from D-erythrose 4-phosphate and phosphoenolpyruvate: step 4/7. In terms of biological role, involved in the biosynthesis of the chorismate, which leads to the biosynthesis of aromatic amino acids. Catalyzes the reversible NADPH linked reduction of 3-dehydroshikimate (DHSA) to yield shikimate (SA). In Streptomyces avermitilis (strain ATCC 31267 / DSM 46492 / JCM 5070 / NBRC 14893 / NCIMB 12804 / NRRL 8165 / MA-4680), this protein is Shikimate dehydrogenase (NADP(+)).